The following is a 610-amino-acid chain: Putative sensor histidine kinase NtrY-like (610 aa).

4 helical membrane-spanning segments follow: residues 18-38 (IGIL…TISI), 49-69 (KVIW…ILLT), 92-112 (IVVA…ISSA), and 292-312 (IIFI…GVIV). Positions 314–368 (AKIVNPIKKLVIATDKVKSGDLTVQVPENEVDKDEIGTLYAAFNRMIKQLSRQQR) constitute an HAMP domain. The 212-residue stretch at 385–596 (KVAHEIKNPL…VIDIRFNLEE (212 aa)) folds into the Histidine kinase domain. The residue at position 388 (histidine 388) is a Phosphohistidine; by autocatalysis.

It localises to the cell membrane. It carries out the reaction ATP + protein L-histidine = ADP + protein N-phospho-L-histidine.. Functionally, member of the two-component regulatory system RBE_0470/RBE_0312. This Rickettsia bellii (strain RML369-C) protein is Putative sensor histidine kinase NtrY-like.